Consider the following 852-residue polypeptide: Disks large homolog 2 (852 aa).

S-palmitoyl cysteine attachment occurs at residues Cys5 and Cys7. Ser28 is modified (phosphoserine). The residue at position 58 (Tyr58) is a Phosphotyrosine. Residue Ser65 is modified to Phosphoserine. PDZ domains are found at residues 98-185 (EITL…RRRR) and 193-280 (EIKL…GKPT). A phosphoserine mark is found at Ser307, Ser328, Ser360, Ser365, Ser406, and Ser414. One can recognise a PDZ 3 domain in the interval 421–502 (KVVLHKGSTG…TVTIIAQYQP (82 aa)). At Tyr505 the chain carries Phosphotyrosine. Ser528, Ser530, and Ser553 each carry phosphoserine. The SH3 domain occupies 536–606 (KRSLYVRAMF…PSKRRVERKE (71 aa)). Positions 662-837 (TRPVIILGPM…IYNQCKLVIE (176 aa)) constitute a Guanylate kinase-like domain. A phosphotyrosine mark is found at Tyr732 and Tyr737.

In terms of assembly, interacts with NOS1/nNOS through second PDZ domain. Interacts with KCNJ2/Kir2.1 (via C-terminus) through one of its PDZ domains. Interacts with KCNJ4. Interacts with FRMPD4 (via C-terminus). Interacts through its PDZ domains with NETO1. Interacts with LRFN1, LRFN2 and LRFN4. Interacts with FASLG. Interacts with KCNJ4. Interacts with ADAM22. Interacts with DGKI (via PDZ-binding motif). Palmitoylation of isoform 1 and isoform 2 is not required for targeting to postsynaptic density. In terms of tissue distribution, brain. Highest levels of isoform 1 in cortex, olfactory bulb, thalamus, hypothalamus, striatum and hippocampus. Highest level of isoform 2 in olfactory bulb. Reduced levels in cortex and hippocampus. Highest level of isoform 4 in spinal cord. Low levels of isoform 4, isoform 6, and isoform 7 in superior cervical ganglion.

The protein localises to the cell membrane. It is found in the postsynaptic density. It localises to the synapse. The protein resides in the membrane. Its subcellular location is the cell projection. The protein localises to the axon. It is found in the perikaryon. Functionally, required for perception of chronic pain through NMDA receptor signaling. Regulates surface expression of NMDA receptors in dorsal horn neurons of the spinal cord. Interacts with the cytoplasmic tail of NMDA receptor subunits as well as inward rectifying potassium channels. Involved in regulation of synaptic stability at cholinergic synapses. Part of the postsynaptic protein scaffold of excitatory synapses. This is Disks large homolog 2 (Dlg2) from Mus musculus (Mouse).